A 615-amino-acid chain; its full sequence is Medium-chain acyl-CoA ligase ACSF2, mitochondrial (615 aa).

The N-terminal 49 residues, 1–49 (MAVYLGMLRLGRLCVASLGARGPRTPLSRPWPNSKLQGVRAFSSGMVDC), are a transit peptide targeting the mitochondrion. Lys179 carries the post-translational modification N6-acetyllysine. Lys182 carries the post-translational modification N6-acetyllysine; alternate. Position 182 is an N6-succinyllysine; alternate (Lys182). The residue at position 199 (Lys199) is an N6-acetyllysine. 263 to 271 (TSGTTGNPK) is a binding site for ATP. N6-acetyllysine is present on residues Lys340 and Lys398. Lys478 is modified (N6-succinyllysine). Residues Asp493 and Arg508 each coordinate ATP. The residue at position 510 (Lys510) is an N6-acetyllysine. N6-acetyllysine; alternate occurs at positions 544 and 570. Residues Lys544 and Lys570 each carry the N6-succinyllysine; alternate modification. Lys599 contacts ATP. An N6-succinyllysine modification is found at Lys599.

The protein belongs to the ATP-dependent AMP-binding enzyme family.

It is found in the mitochondrion. It carries out the reaction a medium-chain fatty acid + ATP + CoA = a medium-chain fatty acyl-CoA + AMP + diphosphate. It catalyses the reaction octanoate + ATP + CoA = octanoyl-CoA + AMP + diphosphate. In terms of biological role, acyl-CoA synthases catalyze the initial reaction in fatty acid metabolism, by forming a thioester with CoA. Has some preference toward medium-chain substrates. Plays a role in adipocyte differentiation. The sequence is that of Medium-chain acyl-CoA ligase ACSF2, mitochondrial from Rattus norvegicus (Rat).